A 69-amino-acid chain; its full sequence is uncharacterized protein (69 aa).

This is an uncharacterized protein from Sinorhizobium fredii (strain NBRC 101917 / NGR234).